We begin with the raw amino-acid sequence, 597 residues long: Phragmoplastin interacting protein 1 (597 aa).

A disordered region spans residues 18-136 (ESLSVSVSET…KTPKKAEEGN (119 aa)). Polar residues predominate over residues 20–29 (LSVSVSETNP). A compositionally biased stretch (low complexity) spans 30–40 (QSQSLKLLLDS). Basic residues-rich tracts occupy residues 43–53 (HKPRLSKREKR) and 112–129 (QKKK…NKTP). A Nuclear localization signal motif is present at residues 112-119 (QKKKNKKK). RRM domains follow at residues 161-238 (NKLY…QYVK) and 262-338 (NRVY…CALK). CCHC-type zinc fingers lie at residues 397 to 411 (CYEC…TACP), 481 to 495 (CYEC…TACP), and 576 to 591 (CYEC…ACPN).

Interacts with phragmoplastins (e.g. DRP1A, DRP1B, DRP1C, DRP1D and DRP1E) and with GTP-bound ARAC11/ROP1 as well as with Ran2 transcripts.

Its subcellular location is the nucleus. It localises to the cell membrane. The protein localises to the cytoplasm. The protein resides in the cytoskeleton. It is found in the phragmoplast. RNA-binding protein which mediates polarized mRNA (e.g. Ran2 transcripts mRNA) transport from the nucleus to the vicinity of the cell plate during cytokinesis and phragmoplast formation. This chain is Phragmoplastin interacting protein 1, found in Arabidopsis thaliana (Mouse-ear cress).